Consider the following 156-residue polypeptide: Small ribosomal subunit protein uS7 (156 aa).

The protein belongs to the universal ribosomal protein uS7 family. As to quaternary structure, part of the 30S ribosomal subunit. Contacts proteins S9 and S11.

One of the primary rRNA binding proteins, it binds directly to 16S rRNA where it nucleates assembly of the head domain of the 30S subunit. Is located at the subunit interface close to the decoding center, probably blocks exit of the E-site tRNA. The chain is Small ribosomal subunit protein uS7 from Synechococcus sp. (strain CC9902).